Here is a 30-residue protein sequence, read N- to C-terminus: Cliotide T6 (30 aa).

A cross-link (cyclopeptide (Ser-Asn)) is located at residues 1–30 (SIPCGESCVYIPCITTIVGCSCKDKVCYKN). 3 cysteine pairs are disulfide-bonded: Cys4-Cys20, Cys8-Cys22, and Cys13-Cys27.

Contains 3 disulfide bonds. In terms of processing, this is a cyclic peptide. As to expression, expressed in pod but not in flower, stem, shoot, leaf, seed, root and nodule (at protein level).

Functionally, probably participates in a plant defense mechanism. This chain is Cliotide T6, found in Clitoria ternatea (Butterfly pea).